Consider the following 71-residue polypeptide: Translation initiation factor IF-1 (71 aa).

The S1-like domain occupies 1-71 (MAKDAIKLRA…TKGRITYRHK (71 aa)).

This sequence belongs to the IF-1 family. Component of the 30S ribosomal translation pre-initiation complex which assembles on the 30S ribosome in the order IF-2 and IF-3, IF-1 and N-formylmethionyl-tRNA(fMet); mRNA recruitment can occur at any time during PIC assembly.

The protein localises to the cytoplasm. Functionally, one of the essential components for the initiation of protein synthesis. Stabilizes the binding of IF-2 and IF-3 on the 30S subunit to which N-formylmethionyl-tRNA(fMet) subsequently binds. Helps modulate mRNA selection, yielding the 30S pre-initiation complex (PIC). Upon addition of the 50S ribosomal subunit IF-1, IF-2 and IF-3 are released leaving the mature 70S translation initiation complex. The protein is Translation initiation factor IF-1 of Mycoplasmopsis synoviae (strain 53) (Mycoplasma synoviae).